Reading from the N-terminus, the 388-residue chain is Galactokinase (388 aa).

Position 33 to 36 (33 to 36 (EHTD)) interacts with substrate. Residues Ser67 and 124–130 (GAGLSSS) contribute to the ATP site. Residues Ser130 and Glu162 each contribute to the Mg(2+) site. Asp174 (proton acceptor) is an active-site residue. Tyr224 is a substrate binding site.

The protein belongs to the GHMP kinase family. GalK subfamily.

The protein resides in the cytoplasm. It catalyses the reaction alpha-D-galactose + ATP = alpha-D-galactose 1-phosphate + ADP + H(+). The protein operates within carbohydrate metabolism; galactose metabolism. Its function is as follows. Catalyzes the transfer of the gamma-phosphate of ATP to D-galactose to form alpha-D-galactose-1-phosphate (Gal-1-P). The chain is Galactokinase from Lacticaseibacillus casei (strain BL23) (Lactobacillus casei).